We begin with the raw amino-acid sequence, 60 residues long: Large ribosomal subunit protein bL32 (60 aa).

Residues 1-16 (MPNPKRRHSKKRTSTR) are compositionally biased toward basic residues. The tract at residues 1 to 28 (MPNPKRRHSKKRTSTRRAHDALKQPGLS) is disordered.

This sequence belongs to the bacterial ribosomal protein bL32 family.

The polypeptide is Large ribosomal subunit protein bL32 (Solibacter usitatus (strain Ellin6076)).